The sequence spans 199 residues: Potassium-transporting ATPase KdpC subunit (199 aa).

Residues 7–27 (PALVMTAALCLITGIIYPGLI) form a helical membrane-spanning segment.

It belongs to the KdpC family. In terms of assembly, the system is composed of three essential subunits: KdpA, KdpB and KdpC.

The protein localises to the cell inner membrane. Functionally, part of the high-affinity ATP-driven potassium transport (or Kdp) system, which catalyzes the hydrolysis of ATP coupled with the electrogenic transport of potassium into the cytoplasm. This subunit acts as a catalytic chaperone that increases the ATP-binding affinity of the ATP-hydrolyzing subunit KdpB by the formation of a transient KdpB/KdpC/ATP ternary complex. This is Potassium-transporting ATPase KdpC subunit from Gemmatimonas aurantiaca (strain DSM 14586 / JCM 11422 / NBRC 100505 / T-27).